A 508-amino-acid chain; its full sequence is Steroid 17-alpha-hydroxylase/17,20 lyase (508 aa).

Cys442 is a heme binding site.

This sequence belongs to the cytochrome P450 family. Requires heme as cofactor.

The protein resides in the endoplasmic reticulum membrane. It localises to the microsome membrane. It carries out the reaction a C21-steroid + reduced [NADPH--hemoprotein reductase] + O2 = a 17alpha-hydroxy-C21-steroid + oxidized [NADPH--hemoprotein reductase] + H2O + H(+). It catalyses the reaction progesterone + reduced [NADPH--hemoprotein reductase] + O2 = 17alpha-hydroxyprogesterone + oxidized [NADPH--hemoprotein reductase] + H2O + H(+). The enzyme catalyses pregnenolone + reduced [NADPH--hemoprotein reductase] + O2 = 17alpha-hydroxypregnenolone + oxidized [NADPH--hemoprotein reductase] + H2O + H(+). The catalysed reaction is 17alpha-hydroxyprogesterone + reduced [NADPH--hemoprotein reductase] + O2 = androst-4-ene-3,17-dione + acetate + oxidized [NADPH--hemoprotein reductase] + H2O + 2 H(+). It carries out the reaction 17alpha-hydroxyprogesterone + reduced [NADPH--hemoprotein reductase] + O2 = 16alpha,17alpha-dihydroxyprogesterone + oxidized [NADPH--hemoprotein reductase] + H2O + H(+). It catalyses the reaction 16alpha,17alpha-dihydroxyprogesterone + reduced [NADPH--hemoprotein reductase] + O2 = 6beta,16alpha,17alpha-trihydroxyprogesterone + oxidized [NADPH--hemoprotein reductase] + H2O + H(+). The enzyme catalyses 17alpha-hydroxypregnenolone + reduced [NADPH--hemoprotein reductase] + O2 = 3beta-hydroxyandrost-5-en-17-one + acetate + oxidized [NADPH--hemoprotein reductase] + H2O + 2 H(+). The catalysed reaction is 16alpha,17alpha-dihydroxypregnenolone + reduced [NADPH--hemoprotein reductase] + O2 = 3beta,16alpha-dihydroxy-androst-5-en-17-one + acetate + oxidized [NADPH--hemoprotein reductase] + H2O + 2 H(+). It carries out the reaction 3beta-hydroxyandrost-5-en-17-one + reduced [NADPH--hemoprotein reductase] + O2 = 3beta,16alpha-dihydroxy-androst-5-en-17-one + oxidized [NADPH--hemoprotein reductase] + H2O + H(+). It catalyses the reaction androst-4-ene-3,17-dione + reduced [NADPH--hemoprotein reductase] + O2 = 16alpha-hydroxyandrost-4-ene-3,17-dione + oxidized [NADPH--hemoprotein reductase] + H2O + H(+). The protein operates within steroid hormone biosynthesis. Its pathway is steroid biosynthesis; glucocorticoid biosynthesis. With respect to regulation, regulated predominantly by intracellular cAMP levels. The 17,20-lyase activity is stimulated by cytochrome b5, which acts as an allosteric effector increasing the Vmax of the lyase activity. A cytochrome P450 monooxygenase involved in corticoid and androgen biosynthesis. Catalyzes 17-alpha hydroxylation of C21 steroids, which is common for both pathways. A second oxidative step, required only for androgen synthesis, involves an acyl-carbon cleavage. The 17-alpha hydroxy intermediates, as part of adrenal glucocorticoids biosynthesis pathway, are precursors of cortisol. Hydroxylates steroid hormones, pregnenolone and progesterone to form 17-alpha hydroxy metabolites, followed by the cleavage of the C17-C20 bond to form C19 steroids, dehydroepiandrosterone (DHEA) and androstenedione. Has 16-alpha hydroxylase activity. Catalyzes 16-alpha hydroxylation of 17-alpha hydroxy pregnenolone, followed by the cleavage of the C17-C20 bond to form 16-alpha-hydroxy DHEA. Also 16-alpha hydroxylates androgens, relevant for estriol synthesis. Mechanistically, uses molecular oxygen inserting one oxygen atom into a substrate, and reducing the second into a water molecule, with two electrons provided by NADPH via cytochrome P450 reductase (CPR; NADPH-ferrihemoprotein reductase). The polypeptide is Steroid 17-alpha-hydroxylase/17,20 lyase (CYP17A1) (Cavia porcellus (Guinea pig)).